Reading from the N-terminus, the 88-residue chain is EMBRYO SURROUNDING FACTOR 1-like protein 7 (88 aa).

Residues 1–22 (MKSSHIALICIVMFSLFALHES) form the signal peptide. Disulfide bonds link cysteine 41-cysteine 57, cysteine 46-cysteine 85, cysteine 55-cysteine 81, and cysteine 58-cysteine 68.

It belongs to the MEG family. As to expression, expressed in leaves and flowers.

The protein is EMBRYO SURROUNDING FACTOR 1-like protein 7 (ESFL7) of Arabidopsis thaliana (Mouse-ear cress).